Consider the following 189-residue polypeptide: Ribosome maturation factor RimM (189 aa).

The region spanning 96–169 is the PRC barrel domain; that stretch reads EDEFFQTDLI…TLLVEPYAAG (74 aa). Positions 170-189 are disordered; the sequence is LIADDEDERPQNEKKKPKKS.

This sequence belongs to the RimM family. In terms of assembly, binds ribosomal protein uS19.

Its subcellular location is the cytoplasm. An accessory protein needed during the final step in the assembly of 30S ribosomal subunit, possibly for assembly of the head region. Essential for efficient processing of 16S rRNA. May be needed both before and after RbfA during the maturation of 16S rRNA. It has affinity for free ribosomal 30S subunits but not for 70S ribosomes. The protein is Ribosome maturation factor RimM of Brucella anthropi (strain ATCC 49188 / DSM 6882 / CCUG 24695 / JCM 21032 / LMG 3331 / NBRC 15819 / NCTC 12168 / Alc 37) (Ochrobactrum anthropi).